We begin with the raw amino-acid sequence, 206 residues long: Holliday junction branch migration complex subunit RuvA (206 aa).

Residues 1–64 form a domain I region; it reads MIGRLTGNLV…ETSQQLFGFI (64 aa). The domain II stretch occupies residues 65 to 142; sequence DQQDREFFRM…SWQVTPSVDA (78 aa). A flexible linker region spans residues 143-154; the sequence is TGSLVALDSAAP. The interval 155-206 is domain III; the sequence is SQNAIVAEAESALVALGYKPVEASKAVARVTSDEITRSEDLIRLALRNMIPA.

The protein belongs to the RuvA family. Homotetramer. Forms an RuvA(8)-RuvB(12)-Holliday junction (HJ) complex. HJ DNA is sandwiched between 2 RuvA tetramers; dsDNA enters through RuvA and exits via RuvB. An RuvB hexamer assembles on each DNA strand where it exits the tetramer. Each RuvB hexamer is contacted by two RuvA subunits (via domain III) on 2 adjacent RuvB subunits; this complex drives branch migration. In the full resolvosome a probable DNA-RuvA(4)-RuvB(12)-RuvC(2) complex forms which resolves the HJ.

Its subcellular location is the cytoplasm. Its function is as follows. The RuvA-RuvB-RuvC complex processes Holliday junction (HJ) DNA during genetic recombination and DNA repair, while the RuvA-RuvB complex plays an important role in the rescue of blocked DNA replication forks via replication fork reversal (RFR). RuvA specifically binds to HJ cruciform DNA, conferring on it an open structure. The RuvB hexamer acts as an ATP-dependent pump, pulling dsDNA into and through the RuvAB complex. HJ branch migration allows RuvC to scan DNA until it finds its consensus sequence, where it cleaves and resolves the cruciform DNA. The protein is Holliday junction branch migration complex subunit RuvA of Teredinibacter turnerae (strain ATCC 39867 / T7901).